A 516-amino-acid polypeptide reads, in one-letter code: Lysophosphatidylcholine acyltransferase 2B (516 aa).

N-linked (GlcNAc...) asparagine glycosylation occurs at N28. 3 helical membrane-spanning segments follow: residues 44-64 (THLSAWRWACTIILGTVLVPV), 68-88 (CIVFLLILLWPVAVLSAINLP), and 102-122 (LIKSALVFLFRLGFFFAGFLV). An HXXXXD motif motif is present at residues 142–147 (HSTFFD). 2 consecutive EF-hand domains span residues 387–422 (PISEPLRQLFSLFDRNQDGTIDFREYVIGLTVLCNP) and 424–459 (NTEKILQMSFKLFDLDEDGYVTERELTTMLQAAFGV). 10 residues coordinate Ca(2+): D400, N402, D404, T406, E411, D437, D439, D441, Y443, and E448.

Belongs to the 1-acyl-sn-glycerol-3-phosphate acyltransferase family.

It localises to the membrane. Its pathway is lipid metabolism; phospholipid metabolism. Functionally, probable acetyltransferase. This Mus musculus (Mouse) protein is Lysophosphatidylcholine acyltransferase 2B (Lpcat2b).